The chain runs to 218 residues: Small ribosomal subunit protein uS3c (218 aa).

In terms of domain architecture, KH type-2 spans 43–118; it reads IKNYVQKNMK…KLNISITRIE (76 aa).

Belongs to the universal ribosomal protein uS3 family. Part of the 30S ribosomal subunit.

It is found in the plastid. The protein resides in the chloroplast. The sequence is that of Small ribosomal subunit protein uS3c (rps3) from Populus trichocarpa (Western balsam poplar).